The primary structure comprises 806 residues: Minor extracellular protease Vpr (806 aa).

Positions 1–28 are cleaved as a signal peptide; it reads MKKGIIRFLLVSFVLFFALSTGITGVQA. The propeptide occupies 29–160; the sequence is APASSKTSAD…TISEDAVSPQ (132 aa). The region spanning 57-142 is the Inhibitor I9 domain; it reads TVIVELKEKS…AVYPNVTYKT (86 aa). The 440-residue stretch at 158–597 folds into the Peptidase S8 domain; sequence SPQMDDSAPY…ARIMNAIKAD (440 aa). Active-site charge relay system residues include Asp189 and His233. The 79-residue stretch at 383 to 461 folds into the PA domain; the sequence is ELVEAGIGEA…KLSLEDGEKL (79 aa). Catalysis depends on Ser534, which acts as the Charge relay system.

The protein belongs to the peptidase S8 family. Probably undergoes C-terminal processing or proteolysis. Auto-processed to form active enzymes of several different molecular weights.

It is found in the secreted. The protein resides in the cell wall. Its activity is regulated as follows. Activity is inhibited by phenylmethylsulfonyl fluoride (PMSF), but not by EDTA. Functionally, serine protease. Involved in the production of the competence and sporulation stimulating factor CSF. Is directly involved in the processing of pro-CSF to CSF. Can also cleave pro-PhrA to PhrA, but cannot cleave pro-PhrE. Shows fibrinolytic activity in vitro. Not essential for growth or sporulation. This Bacillus subtilis (strain 168) protein is Minor extracellular protease Vpr.